The sequence spans 144 residues: Large ribosomal subunit protein uL15 (144 aa).

The segment at 1 to 53 is disordered; that stretch reads MRLNTLSPAEGAKHAPKRLGRGIGSGLGKTGGRGHKGQKSRSGGGVRRGFEGG. The segment covering 21 to 31 has biased composition (gly residues); that stretch reads RGIGSGLGKTG.

The protein belongs to the universal ribosomal protein uL15 family. In terms of assembly, part of the 50S ribosomal subunit.

Its function is as follows. Binds to the 23S rRNA. This is Large ribosomal subunit protein uL15 from Pectobacterium carotovorum subsp. carotovorum (strain PC1).